A 92-amino-acid polypeptide reads, in one-letter code: UPF0223 protein SZO_10560 (92 aa).

Belongs to the UPF0223 family.

The polypeptide is UPF0223 protein SZO_10560 (Streptococcus equi subsp. zooepidemicus (strain H70)).